The chain runs to 163 residues: Nucleotide-binding protein Bcer98_0876 (163 aa).

It belongs to the YajQ family.

Its function is as follows. Nucleotide-binding protein. This chain is Nucleotide-binding protein Bcer98_0876, found in Bacillus cytotoxicus (strain DSM 22905 / CIP 110041 / 391-98 / NVH 391-98).